We begin with the raw amino-acid sequence, 827 residues long: Probable beta-glucosidase H (827 aa).

Asp-223 is a catalytic residue. One can recognise a PA14 domain in the interval 387–546 (RLLTNAVMHF…DSAEMVRSAV (160 aa)). 4 N-linked (GlcNAc...) asparagine glycosylation sites follow: Asn-471, Asn-594, Asn-600, and Asn-625.

The protein belongs to the glycosyl hydrolase 3 family.

Its subcellular location is the secreted. It carries out the reaction Hydrolysis of terminal, non-reducing beta-D-glucosyl residues with release of beta-D-glucose.. Its pathway is glycan metabolism; cellulose degradation. In terms of biological role, beta-glucosidases are one of a number of cellulolytic enzymes involved in the degradation of cellulosic biomass. Catalyzes the last step releasing glucose from the inhibitory cellobiose. The chain is Probable beta-glucosidase H (bglH) from Aspergillus oryzae (strain ATCC 42149 / RIB 40) (Yellow koji mold).